We begin with the raw amino-acid sequence, 202 residues long: Cytochrome c oxidase assembly protein CtaG (202 aa).

The Cytoplasmic portion of the chain corresponds to 1-14; the sequence is MSDKAAAPRKQGRN. The helical; Signal-anchor for type II membrane protein transmembrane segment at 15-37 threads the bilayer; the sequence is NGAVVMMCLSFVFGMGAMSYAAV. Residues 38–202 lie on the Periplasmic side of the membrane; the sequence is PLYRIFCQVT…GGTVKIEKKL (165 aa).

This sequence belongs to the COX11/CtaG family.

The protein localises to the cell inner membrane. In terms of biological role, exerts its effect at some terminal stage of cytochrome c oxidase synthesis, probably by being involved in the insertion of the copper B into subunit I. This Rhizobium etli (strain ATCC 51251 / DSM 11541 / JCM 21823 / NBRC 15573 / CFN 42) protein is Cytochrome c oxidase assembly protein CtaG.